Reading from the N-terminus, the 281-residue chain is Ribosomal protein L11 methyltransferase (281 aa).

Thr-133, Gly-154, Asp-175, and Asn-216 together coordinate S-adenosyl-L-methionine.

This sequence belongs to the methyltransferase superfamily. PrmA family.

Its subcellular location is the cytoplasm. It carries out the reaction L-lysyl-[protein] + 3 S-adenosyl-L-methionine = N(6),N(6),N(6)-trimethyl-L-lysyl-[protein] + 3 S-adenosyl-L-homocysteine + 3 H(+). In terms of biological role, methylates ribosomal protein L11. This is Ribosomal protein L11 methyltransferase from Campylobacter jejuni (strain RM1221).